Here is a 348-residue protein sequence, read N- to C-terminus: Dihydroorotase (348 aa).

The Zn(2+) site is built by H14 and H16. Residues 16-18 (HLR) and N42 each bind substrate. Zn(2+)-binding residues include K100, H137, and H175. K100 carries the N6-carboxylysine modification. H137 lines the substrate pocket. L220 is a substrate binding site. Residue D248 coordinates Zn(2+). D248 is an active-site residue. Residues H252 and A264 each contribute to the substrate site.

The protein belongs to the metallo-dependent hydrolases superfamily. DHOase family. Class II DHOase subfamily. Homodimer. Zn(2+) serves as cofactor.

It carries out the reaction (S)-dihydroorotate + H2O = N-carbamoyl-L-aspartate + H(+). It participates in pyrimidine metabolism; UMP biosynthesis via de novo pathway; (S)-dihydroorotate from bicarbonate: step 3/3. In terms of biological role, catalyzes the reversible cyclization of carbamoyl aspartate to dihydroorotate. The sequence is that of Dihydroorotase from Pseudomonas fluorescens (strain SBW25).